Here is a 160-residue protein sequence, read N- to C-terminus: SsrA-binding protein (160 aa).

It belongs to the SmpB family.

Its subcellular location is the cytoplasm. In terms of biological role, required for rescue of stalled ribosomes mediated by trans-translation. Binds to transfer-messenger RNA (tmRNA), required for stable association of tmRNA with ribosomes. tmRNA and SmpB together mimic tRNA shape, replacing the anticodon stem-loop with SmpB. tmRNA is encoded by the ssrA gene; the 2 termini fold to resemble tRNA(Ala) and it encodes a 'tag peptide', a short internal open reading frame. During trans-translation Ala-aminoacylated tmRNA acts like a tRNA, entering the A-site of stalled ribosomes, displacing the stalled mRNA. The ribosome then switches to translate the ORF on the tmRNA; the nascent peptide is terminated with the 'tag peptide' encoded by the tmRNA and targeted for degradation. The ribosome is freed to recommence translation, which seems to be the essential function of trans-translation. In Escherichia coli O139:H28 (strain E24377A / ETEC), this protein is SsrA-binding protein.